A 126-amino-acid polypeptide reads, in one-letter code: Small ribosomal subunit protein bS6 (126 aa).

Residues 107–126 form a disordered region; that stretch reads RDRERGERSERPRDDFAPAA.

It belongs to the bacterial ribosomal protein bS6 family.

Functionally, binds together with bS18 to 16S ribosomal RNA. In Caulobacter sp. (strain K31), this protein is Small ribosomal subunit protein bS6.